Here is a 329-residue protein sequence, read N- to C-terminus: DNA-directed RNA polymerase subunit alpha (329 aa).

The alpha N-terminal domain (alpha-NTD) stretch occupies residues 1 to 235; the sequence is MQGSVTEFLK…EQLDAFVDLR (235 aa). The segment at 249–329 is alpha C-terminal domain (alpha-CTD); it reads FDPILLRPVD…NWPPASIAED (81 aa).

The protein belongs to the RNA polymerase alpha chain family. Homodimer. The RNAP catalytic core consists of 2 alpha, 1 beta, 1 beta' and 1 omega subunit. When a sigma factor is associated with the core the holoenzyme is formed, which can initiate transcription.

The enzyme catalyses RNA(n) + a ribonucleoside 5'-triphosphate = RNA(n+1) + diphosphate. Functionally, DNA-dependent RNA polymerase catalyzes the transcription of DNA into RNA using the four ribonucleoside triphosphates as substrates. The polypeptide is DNA-directed RNA polymerase subunit alpha (Actinobacillus succinogenes (strain ATCC 55618 / DSM 22257 / CCUG 43843 / 130Z)).